Consider the following 566-residue polypeptide: MCRVMKASFSRKVKLELCLLSDCALLSSSSAPTNELSGTNLEAHINESPDPNALVGVIIERSPSDSTQTNEFKGATKETLTIETPHSSECKGAGLLSPVSKSMLERLSKFEVEDAENVASYDTKIKKIVRSIVSSFAFGIFGVFLVLLDVTLLLADLIFNDSKLYIPLVYRSISLAIALFFLMDVLLRVFVEGRQHYFSDLLNVLDTAIIVTPLLVDVVYIFFDIKFLRNIPRWIHLVRLLRLIILIRIFHLIHQKRELEKLMRRLVSENKRRYTRDGFDLDLTYVTERIIAMSFPSSGRQSFYRNPIEEVVRFLDKKHPNHYRVYNLCSERAYDPKYFHNRVSRIMIDDHNVPTLHEMVVFTKEVNEWMAQDPANIVAIHCKGGKGRTGTMICAFLIASEIFLTAEESLYYFGERRTDKTNSSKFQGVETPSQNRYVGYFAQVKHLYNWNLPPRRILFIKRFIIYSIRGVGTGGVCDLKVRIVMEKKVVFSSTSLGNCSILHDIETDRVLIDVFSGPPLYDDVKVQFFSSNLPKYYDNCPFFFWFNTSFIQSNRHILHSFRLVFT.

Transmembrane regions (helical) follow at residues 135–155 (SFAF…LLLA), 173–193 (ISLA…FVEG), 208–228 (AIIV…IKFL), and 234–254 (WIHL…HLIH). The region spanning 272–448 (RRYTRDGFDL…GYFAQVKHLY (177 aa)) is the Phosphatase tensin-type domain. Cys-382 serves as the catalytic Phosphocysteine intermediate. The 112-residue stretch at 455-566 (RRILFIKRFI…ILHSFRLVFT (112 aa)) folds into the C2 tensin-type domain.

It localises to the endoplasmic reticulum membrane. The protein resides in the golgi apparatus membrane. The catalysed reaction is a 1,2-diacyl-sn-glycero-3-phospho-(1D-myo-inositol-3,4,5-trisphosphate) + H2O = a 1,2-diacyl-sn-glycero-3-phospho-(1D-myo-inositol-4,5-bisphosphate) + phosphate. In terms of biological role, acts as a lipid phosphatase, removing the phosphate in the D3 position of the inositol ring from phosphatidylinositol 3,4,5-trisphosphate. This Macaca fascicularis (Crab-eating macaque) protein is Phosphatidylinositol 3,4,5-trisphosphate 3-phosphatase TPTE2 (TPTE2).